The primary structure comprises 232 residues: Homeobox protein Rhox13 (232 aa).

The segment at 45–114 (QAAVASSHDS…EAAAPSVAAV (70 aa)) is disordered. Positions 68–105 (SDSESESDSESESDSSDSSDESDDDSSTSDEDTSDPEE) are enriched in acidic residues. Residues 148 to 207 (RRGPPFHFAQWQVEEMESLFEETQYPDLLTRGELARTLNVPEVKVKVWFTNRRAKQRKIE) constitute a DNA-binding region (homeobox).

It belongs to the paired-like homeobox family.

The protein localises to the nucleus. Functionally, probable transcription factor. This Mus musculus (Mouse) protein is Homeobox protein Rhox13.